The following is a 482-amino-acid chain: tRNA sulfurtransferase (482 aa).

Residues leucine 61 to arginine 165 form the THUMP domain. Residues leucine 183–isoleucine 184, lysine 265, glycine 287, and glutamine 296 each bind ATP. Residues cysteine 344 and cysteine 456 are joined by a disulfide bond. In terms of domain architecture, Rhodanese spans phenylalanine 404–proline 482. Residue cysteine 456 is the Cysteine persulfide intermediate of the active site.

Belongs to the ThiI family.

Its subcellular location is the cytoplasm. The enzyme catalyses [ThiI sulfur-carrier protein]-S-sulfanyl-L-cysteine + a uridine in tRNA + 2 reduced [2Fe-2S]-[ferredoxin] + ATP + H(+) = [ThiI sulfur-carrier protein]-L-cysteine + a 4-thiouridine in tRNA + 2 oxidized [2Fe-2S]-[ferredoxin] + AMP + diphosphate. The catalysed reaction is [ThiS sulfur-carrier protein]-C-terminal Gly-Gly-AMP + S-sulfanyl-L-cysteinyl-[cysteine desulfurase] + AH2 = [ThiS sulfur-carrier protein]-C-terminal-Gly-aminoethanethioate + L-cysteinyl-[cysteine desulfurase] + A + AMP + 2 H(+). Its pathway is cofactor biosynthesis; thiamine diphosphate biosynthesis. In terms of biological role, catalyzes the ATP-dependent transfer of a sulfur to tRNA to produce 4-thiouridine in position 8 of tRNAs, which functions as a near-UV photosensor. Also catalyzes the transfer of sulfur to the sulfur carrier protein ThiS, forming ThiS-thiocarboxylate. This is a step in the synthesis of thiazole, in the thiamine biosynthesis pathway. The sulfur is donated as persulfide by IscS. In Salmonella choleraesuis (strain SC-B67), this protein is tRNA sulfurtransferase.